The primary structure comprises 477 residues: Aspartyl/glutamyl-tRNA(Asn/Gln) amidotransferase subunit B (477 aa).

Belongs to the GatB/GatE family. GatB subfamily. As to quaternary structure, heterotrimer of A, B and C subunits.

It carries out the reaction L-glutamyl-tRNA(Gln) + L-glutamine + ATP + H2O = L-glutaminyl-tRNA(Gln) + L-glutamate + ADP + phosphate + H(+). The catalysed reaction is L-aspartyl-tRNA(Asn) + L-glutamine + ATP + H2O = L-asparaginyl-tRNA(Asn) + L-glutamate + ADP + phosphate + 2 H(+). Allows the formation of correctly charged Asn-tRNA(Asn) or Gln-tRNA(Gln) through the transamidation of misacylated Asp-tRNA(Asn) or Glu-tRNA(Gln) in organisms which lack either or both of asparaginyl-tRNA or glutaminyl-tRNA synthetases. The reaction takes place in the presence of glutamine and ATP through an activated phospho-Asp-tRNA(Asn) or phospho-Glu-tRNA(Gln). The polypeptide is Aspartyl/glutamyl-tRNA(Asn/Gln) amidotransferase subunit B (Coxiella burnetii (strain CbuK_Q154) (Coxiella burnetii (strain Q154))).